The sequence spans 364 residues: DNA replication and repair protein RecF (364 aa).

30–37 (GNNGQGKT) serves as a coordination point for ATP.

The protein belongs to the RecF family.

It is found in the cytoplasm. Its function is as follows. The RecF protein is involved in DNA metabolism; it is required for DNA replication and normal SOS inducibility. RecF binds preferentially to single-stranded, linear DNA. It also seems to bind ATP. The sequence is that of DNA replication and repair protein RecF from Geobacter sp. (strain M21).